Consider the following 331-residue polypeptide: Glutamyl-Q tRNA(Asp) synthetase (331 aa).

A compositionally biased stretch (polar residues) spans 1–30 (MVQQAVIQRSANQQLSNQRSANQRATNQPT). The disordered stretch occupies residues 1–36 (MVQQAVIQRSANQQLSNQRSANQRATNQPTEYVGRF). L-glutamate is bound by residues 35–39 (RFAPS) and glutamate 71. Positions 38 to 48 (PSPSGDLHFGS) match the 'HIGH' region motif. Zn(2+) is bound by residues cysteine 127, cysteine 129, tyrosine 141, and cysteine 145. Residues tyrosine 198 and arginine 216 each coordinate L-glutamate. A 'KMSKS' region motif is present at residues 254 to 258 (KLSKQ). Lysine 257 serves as a coordination point for ATP.

It belongs to the class-I aminoacyl-tRNA synthetase family. GluQ subfamily. Requires Zn(2+) as cofactor.

Its function is as follows. Catalyzes the tRNA-independent activation of glutamate in presence of ATP and the subsequent transfer of glutamate onto a tRNA(Asp). Glutamate is transferred on the 2-amino-5-(4,5-dihydroxy-2-cyclopenten-1-yl) moiety of the queuosine in the wobble position of the QUC anticodon. The protein is Glutamyl-Q tRNA(Asp) synthetase of Yersinia pseudotuberculosis serotype I (strain IP32953).